Here is a 127-residue protein sequence, read N- to C-terminus: Ribonuclease P protein component 1 (127 aa).

It belongs to the eukaryotic/archaeal RNase P protein component 1 family. In terms of assembly, consists of a catalytic RNA component and at least 5 protein subunits. Forms a heterodimeric subcomplex with Rnp4. Reconstituted enzyme missing individual protein subunits is suboptimally active, showing each subunit contributes to optimization of activity.

It is found in the cytoplasm. It catalyses the reaction Endonucleolytic cleavage of RNA, removing 5'-extranucleotides from tRNA precursor.. In terms of biological role, part of ribonuclease P (RNase P), a protein complex that generates mature tRNA molecules by cleaving their 5'-ends. Binds RNase P RNA. The sequence is that of Ribonuclease P protein component 1 from Pyrococcus horikoshii (strain ATCC 700860 / DSM 12428 / JCM 9974 / NBRC 100139 / OT-3).